The primary structure comprises 341 residues: UDP-N-acetylenolpyruvoylglucosamine reductase (341 aa).

Residues 12 to 182 (LSAYAKRLDI…ISVGLLLKKN (171 aa)) enclose the FAD-binding PCMH-type domain. R158 is a catalytic residue. The active-site Proton donor is S228. E324 is an active-site residue.

Belongs to the MurB family. FAD serves as cofactor.

It localises to the cytoplasm. It catalyses the reaction UDP-N-acetyl-alpha-D-muramate + NADP(+) = UDP-N-acetyl-3-O-(1-carboxyvinyl)-alpha-D-glucosamine + NADPH + H(+). It functions in the pathway cell wall biogenesis; peptidoglycan biosynthesis. In terms of biological role, cell wall formation. The chain is UDP-N-acetylenolpyruvoylglucosamine reductase from Photorhabdus laumondii subsp. laumondii (strain DSM 15139 / CIP 105565 / TT01) (Photorhabdus luminescens subsp. laumondii).